The chain runs to 383 residues: Succinyl-diaminopimelate desuccinylase (383 aa).

Residue H72 participates in Zn(2+) binding. Residue D74 is part of the active site. D105 contacts Zn(2+). The Proton acceptor role is filled by E139. Residues E140, E168, and H356 each contribute to the Zn(2+) site.

It belongs to the peptidase M20A family. DapE subfamily. Homodimer. Zn(2+) serves as cofactor. It depends on Co(2+) as a cofactor.

The catalysed reaction is N-succinyl-(2S,6S)-2,6-diaminopimelate + H2O = (2S,6S)-2,6-diaminopimelate + succinate. It functions in the pathway amino-acid biosynthesis; L-lysine biosynthesis via DAP pathway; LL-2,6-diaminopimelate from (S)-tetrahydrodipicolinate (succinylase route): step 3/3. Catalyzes the hydrolysis of N-succinyl-L,L-diaminopimelic acid (SDAP), forming succinate and LL-2,6-diaminopimelate (DAP), an intermediate involved in the bacterial biosynthesis of lysine and meso-diaminopimelic acid, an essential component of bacterial cell walls. The protein is Succinyl-diaminopimelate desuccinylase of Beijerinckia indica subsp. indica (strain ATCC 9039 / DSM 1715 / NCIMB 8712).